Here is a 421-residue protein sequence, read N- to C-terminus: Phosphoribosylamine--glycine ligase (421 aa).

The ATP-grasp domain maps to 108-314; that stretch reads KEIMVKYNVP…FAQNIDDIMM (207 aa). 134-195 contacts ATP; sequence IEEQGAPIVV…EEFLDGEEFS (62 aa). Residues glutamate 284 and asparagine 286 each coordinate Mg(2+).

The protein belongs to the GARS family. Requires Mg(2+) as cofactor. It depends on Mn(2+) as a cofactor.

The enzyme catalyses 5-phospho-beta-D-ribosylamine + glycine + ATP = N(1)-(5-phospho-beta-D-ribosyl)glycinamide + ADP + phosphate + H(+). The protein operates within purine metabolism; IMP biosynthesis via de novo pathway; N(1)-(5-phospho-D-ribosyl)glycinamide from 5-phospho-alpha-D-ribose 1-diphosphate: step 2/2. The polypeptide is Phosphoribosylamine--glycine ligase (Streptococcus pyogenes serotype M1).